Here is a 1323-residue protein sequence, read N- to C-terminus: Clustered mitochondria protein homolog (1323 aa).

The TPR 1 repeat unit spans residues 103–141; sequence KEKPYNLAAIYDHLNKFREVIGLHFLDKYSSEVGVLSGV. The tract at residues 149 to 186 is disordered; the sequence is LQDVKETEPETQDDKDKETDETKSTKEDSNQTEEKKSE. The span at 150–186 shows a compositional bias: basic and acidic residues; it reads QDVKETEPETQDDKDKETDETKSTKEDSNQTEEKKSE. A Clu domain is found at 351–608; sequence FANQPDASRS…RATPLDIEFI (258 aa). One copy of the TPR 2 repeat lies at 530–563; the sequence is CYGLSTDGSKIFSDSSFENVLKPIAEAFHLKPHP. The segment covering 764-801 has biased composition (basic and acidic residues); that stretch reads NEEEISKRKEESEKKATEGKDQDKEEEKANDNEKNKED. The tract at residues 764–808 is disordered; that stretch reads NEEEISKRKEESEKKATEGKDQDKEEEKANDNEKNKEDDKEEVSN. 4 TPR repeats span residues 1042–1076, 1099–1132, 1141–1174, and 1183–1216; these read LSVY…KSEA, ITAY…WTLV, VNTY…STKL, and GMLR…FTKF. Positions 1250-1323 are disordered; that stretch reads KALAQQASAS…KKSNNKKSKK (74 aa). Residues 1308 to 1323 are compositionally biased toward basic residues; sequence PKKQLKKKSNNKKSKK.

It belongs to the CLU family. As to quaternary structure, may associate with the eukaryotic translation initiation factor 3 (eIF-3) complex.

It is found in the cytoplasm. In terms of biological role, mRNA-binding protein involved in proper cytoplasmic distribution of mitochondria. This chain is Clustered mitochondria protein homolog, found in Debaryomyces hansenii (strain ATCC 36239 / CBS 767 / BCRC 21394 / JCM 1990 / NBRC 0083 / IGC 2968) (Yeast).